The chain runs to 368 residues: Cystathionine beta-lyase (368 aa).

The residue at position 221 (lysine 221) is an N6-(pyridoxal phosphate)lysine.

Belongs to the class-II pyridoxal-phosphate-dependent aminotransferase family. MalY/PatB cystathionine beta-lyase subfamily. It depends on pyridoxal 5'-phosphate as a cofactor.

It catalyses the reaction L,L-cystathionine + H2O = L-homocysteine + pyruvate + NH4(+). The enzyme catalyses an S-substituted L-cysteine + H2O = a thiol + pyruvate + NH4(+). It functions in the pathway amino-acid biosynthesis; L-methionine biosynthesis via de novo pathway; L-homocysteine from L-cystathionine: step 1/1. In terms of biological role, catalyzes the transformation of cystathionine to homocysteine. In Corynebacterium glutamicum (Brevibacterium saccharolyticum), this protein is Cystathionine beta-lyase (metC).